We begin with the raw amino-acid sequence, 118 residues long: uncharacterized protein (118 aa).

It to S.pombe tam6.

Its subcellular location is the mitochondrion. This is an uncharacterized protein from Saccharomyces cerevisiae (strain ATCC 204508 / S288c) (Baker's yeast).